The following is a 471-amino-acid chain: Probable anion transporter 5, chloroplastic (471 aa).

The N-terminal 59 residues, 1–59 (MAASASASALQAERCLLVGVGAGPRRHRLPLRMPPPLHAPPALLLLPHRRRRRWPPAVR), are a transit peptide targeting the chloroplast. Residues 56–76 (PAVRASPGEGGGGGGGGGGGG) form a disordered region. The next 4 helical transmembrane spans lie at 62–82 (PGEG…AGAL), 103–123 (IGVV…GFMP), 162–182 (VVFG…PPII), and 185–205 (LGWE…CLGF). The span at 63–76 (GEGGGGGGGGGGGG) shows a compositional bias: gly residues. Residues 226-247 (GQSPSGSSDLISSSVSPKSSES) are disordered. A compositionally biased stretch (low complexity) spans 228–247 (SPSGSSDLISSSVSPKSSES). A run of 6 helical transmembrane segments spans residues 270–290 (VWAM…CLSW), 307–327 (AWVS…AAPF), 348–368 (IAFL…GVPP), 371–391 (IVAF…GLYC), 403–423 (ILLG…VALT), and 435–455 (ISLF…WLAF).

Belongs to the major facilitator superfamily. Sodium/anion cotransporter (TC 2.A.1.14) family.

Its subcellular location is the plastid. The protein localises to the chloroplast membrane. Probable anion transporter. This is Probable anion transporter 5, chloroplastic (PHT4;5) from Oryza sativa subsp. japonica (Rice).